A 59-amino-acid chain; its full sequence is Ferredoxin-2 (59 aa).

4Fe-4S ferredoxin-type domains are found at residues 3–32 (YSVI…LQNG) and 33–59 (KAVP…AIVE). The [4Fe-4S] cluster site is built by Cys-12, Cys-15, Cys-18, Cys-22, Cys-42, Cys-45, Cys-48, and Cys-52.

Homodimer. The cofactor is [4Fe-4S] cluster.

Its subcellular location is the periplasm. Its function is as follows. Ferredoxins are iron-sulfur proteins that transfer electrons in a wide variety of metabolic reactions. The protein is Ferredoxin-2 of Desulfomicrobium norvegicum (strain DSM 1741 / NCIMB 8310) (Desulfovibrio baculatus (strain Norway 4)).